The following is an 851-amino-acid chain: DNA mismatch repair protein MutS (851 aa).

Gly614–Ser621 lines the ATP pocket.

This sequence belongs to the DNA mismatch repair MutS family.

This protein is involved in the repair of mismatches in DNA. It is possible that it carries out the mismatch recognition step. This protein has a weak ATPase activity. The polypeptide is DNA mismatch repair protein MutS (Yersinia pseudotuberculosis serotype O:1b (strain IP 31758)).